We begin with the raw amino-acid sequence, 159 residues long: UPF0262 protein TM1040_3562 (159 aa).

The tract at residues 1–21 (MSRISQIELDDRNLPPPTPEI) is disordered.

It belongs to the UPF0262 family.

The chain is UPF0262 protein TM1040_3562 from Ruegeria sp. (strain TM1040) (Silicibacter sp.).